We begin with the raw amino-acid sequence, 397 residues long: Phosphoglycerate kinase (397 aa).

Residues 26 to 28 (DLN), arginine 42, 65 to 68 (HLGR), arginine 119, and arginine 152 contribute to the substrate site. Residues lysine 203, glutamate 325, and 351 to 354 (GGDT) each bind ATP.

It belongs to the phosphoglycerate kinase family. In terms of assembly, monomer.

Its subcellular location is the cytoplasm. It carries out the reaction (2R)-3-phosphoglycerate + ATP = (2R)-3-phospho-glyceroyl phosphate + ADP. Its pathway is carbohydrate degradation; glycolysis; pyruvate from D-glyceraldehyde 3-phosphate: step 2/5. In Bordetella pertussis (strain Tohama I / ATCC BAA-589 / NCTC 13251), this protein is Phosphoglycerate kinase.